We begin with the raw amino-acid sequence, 544 residues long: Methionine--tRNA ligase 2 (544 aa).

The short motif at 10-20 is the 'HIGH' region element; the sequence is PYANGSLHLGH. Positions 141, 144, 153, and 156 each coordinate Zn(2+). Residues 329-333 carry the 'KMSKS' region motif; sequence KLSTS. Position 332 (Thr332) interacts with ATP.

The protein belongs to the class-I aminoacyl-tRNA synthetase family. MetG type 1 subfamily. In terms of assembly, monomer. It depends on Zn(2+) as a cofactor.

Its subcellular location is the cytoplasm. The catalysed reaction is tRNA(Met) + L-methionine + ATP = L-methionyl-tRNA(Met) + AMP + diphosphate. Functionally, is required not only for elongation of protein synthesis but also for the initiation of all mRNA translation through initiator tRNA(fMet) aminoacylation. The polypeptide is Methionine--tRNA ligase 2 (Bacillus anthracis).